The primary structure comprises 353 residues: Photosystem II protein D1 (353 aa).

Thr2 bears the N-acetylthreonine mark. Thr2 is modified (phosphothreonine). 3 helical membrane passes run 29–46 (YIGWFGVLMIPTLLTATS), 118–133 (HFLLGVACYMGREWEL), and 142–156 (WIAVAYSAPVAAAAA). His118 contributes to the chlorophyll a binding site. Residue Tyr126 coordinates pheophytin a. Positions 170 and 189 each coordinate [CaMn4O5] cluster. Residues 197–218 (FHMLGVAGVFGGSLFSAMHGSL) traverse the membrane as a helical segment. Residue His198 coordinates chlorophyll a. A quinone-binding positions include His215 and 264–265 (SF). His215 contacts Fe cation. His272 contributes to the Fe cation binding site. The chain crosses the membrane as a helical span at residues 274–288 (FLAAWPVVGIWFTAL). Residues His332, Glu333, Asp342, and Ala344 each coordinate [CaMn4O5] cluster. The propeptide occupies 345-353 (AVEAPSING).

It belongs to the reaction center PufL/M/PsbA/D family. PSII is composed of 1 copy each of membrane proteins PsbA, PsbB, PsbC, PsbD, PsbE, PsbF, PsbH, PsbI, PsbJ, PsbK, PsbL, PsbM, PsbT, PsbX, PsbY, PsbZ, Psb30/Ycf12, at least 3 peripheral proteins of the oxygen-evolving complex and a large number of cofactors. It forms dimeric complexes. It depends on The D1/D2 heterodimer binds P680, chlorophylls that are the primary electron donor of PSII, and subsequent electron acceptors. It shares a non-heme iron and each subunit binds pheophytin, quinone, additional chlorophylls, carotenoids and lipids. D1 provides most of the ligands for the Mn4-Ca-O5 cluster of the oxygen-evolving complex (OEC). There is also a Cl(-1) ion associated with D1 and D2, which is required for oxygen evolution. The PSII complex binds additional chlorophylls, carotenoids and specific lipids. as a cofactor. In terms of processing, tyr-161 forms a radical intermediate that is referred to as redox-active TyrZ, YZ or Y-Z. C-terminally processed by CTPA; processing is essential to allow assembly of the oxygen-evolving complex and thus photosynthetic growth.

It localises to the plastid. It is found in the chloroplast thylakoid membrane. It catalyses the reaction 2 a plastoquinone + 4 hnu + 2 H2O = 2 a plastoquinol + O2. In terms of biological role, photosystem II (PSII) is a light-driven water:plastoquinone oxidoreductase that uses light energy to abstract electrons from H(2)O, generating O(2) and a proton gradient subsequently used for ATP formation. It consists of a core antenna complex that captures photons, and an electron transfer chain that converts photonic excitation into a charge separation. The D1/D2 (PsbA/PsbD) reaction center heterodimer binds P680, the primary electron donor of PSII as well as several subsequent electron acceptors. This is Photosystem II protein D1 from Vitis vinifera (Grape).